The sequence spans 360 residues: Photosystem II protein D1 2 (360 aa).

The next 3 membrane-spanning stretches (helical) occupy residues 29 to 46, 118 to 133, and 142 to 156; these read YIGW…TAVT, HYMI…QWEY, and WICV…ATYS. Residue histidine 118 participates in chlorophyll a binding. Tyrosine 126 is a binding site for pheophytin a. Positions 170 and 189 each coordinate [CaMn4O5] cluster. A helical transmembrane segment spans residues 197–218; the sequence is FHMFGVAGVLGGSLFAAMHGSL. Residue histidine 198 coordinates chlorophyll a. A quinone contacts are provided by residues histidine 215 and 264–265; that span reads SF. Histidine 215 provides a ligand contact to Fe cation. Position 272 (histidine 272) interacts with Fe cation. Residues 274-288 traverse the membrane as a helical segment; that stretch reads FLGAWPVVCIWLTAM. Residues histidine 332, glutamate 333, aspartate 342, and alanine 344 each coordinate [CaMn4O5] cluster. The propeptide occupies 345 to 360; sequence AGESAPVALTAPVING.

Belongs to the reaction center PufL/M/PsbA/D family. In terms of assembly, PSII is composed of 1 copy each of membrane proteins PsbA, PsbB, PsbC, PsbD, PsbE, PsbF, PsbH, PsbI, PsbJ, PsbK, PsbL, PsbM, PsbT, PsbX, PsbY, PsbZ, Psb30/Ycf12, peripheral proteins PsbO, CyanoQ (PsbQ), PsbU, PsbV and a large number of cofactors. It forms dimeric complexes. The D1/D2 heterodimer binds P680, chlorophylls that are the primary electron donor of PSII, and subsequent electron acceptors. It shares a non-heme iron and each subunit binds pheophytin, quinone, additional chlorophylls, carotenoids and lipids. D1 provides most of the ligands for the Mn4-Ca-O5 cluster of the oxygen-evolving complex (OEC). There is also a Cl(-1) ion associated with D1 and D2, which is required for oxygen evolution. The PSII complex binds additional chlorophylls, carotenoids and specific lipids. is required as a cofactor. Tyr-161 forms a radical intermediate that is referred to as redox-active TyrZ, YZ or Y-Z. Post-translationally, C-terminally processed by CtpA; processing is essential to allow assembly of the oxygen-evolving complex and thus photosynthetic growth.

Its subcellular location is the cellular thylakoid membrane. It catalyses the reaction 2 a plastoquinone + 4 hnu + 2 H2O = 2 a plastoquinol + O2. In terms of biological role, photosystem II (PSII) is a light-driven water:plastoquinone oxidoreductase that uses light energy to abstract electrons from H(2)O, generating O(2) and a proton gradient subsequently used for ATP formation. It consists of a core antenna complex that captures photons, and an electron transfer chain that converts photonic excitation into a charge separation. The D1/D2 (PsbA/PsbD) reaction center heterodimer binds P680, the primary electron donor of PSII as well as several subsequent electron acceptors. This is Photosystem II protein D1 2 from Acaryochloris marina (strain MBIC 11017).